A 181-amino-acid polypeptide reads, in one-letter code: ATP synthase subunit b 2 (181 aa).

The segment covering 1 to 18 has biased composition (low complexity); sequence MATTTHDAGHGAAEAAHG. The disordered stretch occupies residues 1-20; that stretch reads MATTTHDAGHGAAEAAHGSS. Residues 34–54 form a helical membrane-spanning segment; it reads IFWLLVTLVVIYLILSRIALP.

This sequence belongs to the ATPase B chain family. In terms of assembly, F-type ATPases have 2 components, F(1) - the catalytic core - and F(0) - the membrane proton channel. F(1) has five subunits: alpha(3), beta(3), gamma(1), delta(1), epsilon(1). F(0) has three main subunits: a(1), b(2) and c(10-14). The alpha and beta chains form an alternating ring which encloses part of the gamma chain. F(1) is attached to F(0) by a central stalk formed by the gamma and epsilon chains, while a peripheral stalk is formed by the delta and b chains.

It localises to the cell inner membrane. F(1)F(0) ATP synthase produces ATP from ADP in the presence of a proton or sodium gradient. F-type ATPases consist of two structural domains, F(1) containing the extramembraneous catalytic core and F(0) containing the membrane proton channel, linked together by a central stalk and a peripheral stalk. During catalysis, ATP synthesis in the catalytic domain of F(1) is coupled via a rotary mechanism of the central stalk subunits to proton translocation. Functionally, component of the F(0) channel, it forms part of the peripheral stalk, linking F(1) to F(0). The b'-subunit is a diverged and duplicated form of b found in plants and photosynthetic bacteria. The chain is ATP synthase subunit b 2 (atpF2) from Ruegeria sp. (strain TM1040) (Silicibacter sp.).